The following is a 141-amino-acid chain: uncharacterized protein (141 aa).

Its subcellular location is the cytoplasm. This is an uncharacterized protein from Homo sapiens (Human).